The primary structure comprises 119 residues: Large ribosomal subunit protein uL18 (119 aa).

It belongs to the universal ribosomal protein uL18 family. In terms of assembly, part of the 50S ribosomal subunit; part of the 5S rRNA/L5/L18/L25 subcomplex. Contacts the 5S and 23S rRNAs.

In terms of biological role, this is one of the proteins that bind and probably mediate the attachment of the 5S RNA into the large ribosomal subunit, where it forms part of the central protuberance. This is Large ribosomal subunit protein uL18 from Cereibacter sphaeroides (strain ATCC 17025 / ATH 2.4.3) (Rhodobacter sphaeroides).